Reading from the N-terminus, the 510-residue chain is NAD(P)H-quinone oxidoreductase subunit 2, chloroplastic (510 aa).

Transmembrane regions (helical) follow at residues 24–44, 59–79, 99–119, 124–144, 149–169, 183–203, 229–249, 295–315, 323–343, 347–367, 395–415, and 418–438; these read LLLF…GLIL, WFYF…LFRW, IFQF…VEYI, MAIT…MFLC, LITI…LSGY, YLLM…WLYG, ISIA…PAPF, WHLL…LIAI, MLAY…IVGD, GYAS…GTFA, ALSS…AGFF, and LHLF…IGLL.

Belongs to the complex I subunit 2 family. In terms of assembly, NDH is composed of at least 16 different subunits, 5 of which are encoded in the nucleus.

It localises to the plastid. It is found in the chloroplast thylakoid membrane. It catalyses the reaction a plastoquinone + NADH + (n+1) H(+)(in) = a plastoquinol + NAD(+) + n H(+)(out). The catalysed reaction is a plastoquinone + NADPH + (n+1) H(+)(in) = a plastoquinol + NADP(+) + n H(+)(out). In terms of biological role, NDH shuttles electrons from NAD(P)H:plastoquinone, via FMN and iron-sulfur (Fe-S) centers, to quinones in the photosynthetic chain and possibly in a chloroplast respiratory chain. The immediate electron acceptor for the enzyme in this species is believed to be plastoquinone. Couples the redox reaction to proton translocation, and thus conserves the redox energy in a proton gradient. The chain is NAD(P)H-quinone oxidoreductase subunit 2, chloroplastic from Allium textile (Textile onion).